The sequence spans 118 residues: V-type proton ATPase subunit G 3 (118 aa).

Residues 1 to 34 are disordered; the sequence is MTSQSQGIHQLLQAEKRAKDKLEEAKKRKGKRLK. Positions 5-54 form a coiled coil; it reads SQGIHQLLQAEKRAKDKLEEAKKRKGKRLKQAKEEAMVEIDQYRMQRDKE. Over residues 14-26 the composition is skewed to basic and acidic residues; it reads AEKRAKDKLEEAK.

This sequence belongs to the V-ATPase G subunit family. As to quaternary structure, V-ATPase is a heteromultimeric enzyme made up of two complexes: the ATP-hydrolytic V1 complex and the proton translocation V0 complex. The V1 complex consists of three catalytic AB heterodimers that form a heterohexamer, three peripheral stalks each consisting of EG heterodimers, one central rotor including subunits D and F, and the regulatory subunits C and H. The proton translocation complex V0 consists of the proton transport subunit a, a ring of proteolipid subunits c9c'', rotary subunit d, subunits e and f, and the accessory subunits ATP6AP1/Ac45 and ATP6AP2/PRR. Kidney.

Subunit of the V1 complex of vacuolar(H+)-ATPase (V-ATPase), a multisubunit enzyme composed of a peripheral complex (V1) that hydrolyzes ATP and a membrane integral complex (V0) that translocates protons. V-ATPase is responsible for acidifying and maintaining the pH of intracellular compartments and in some cell types, is targeted to the plasma membrane, where it is responsible for acidifying the extracellular environment. In Homo sapiens (Human), this protein is V-type proton ATPase subunit G 3 (ATP6V1G3).